The following is a 328-amino-acid chain: Pyruvate dehydrogenase E1 component subunit beta (328 aa).

Glutamate 60 contributes to the thiamine diphosphate binding site. K(+)-binding residues include isoleucine 113, isoleucine 162, and asparagine 166.

As to quaternary structure, heterodimer of an alpha and a beta chain. Thiamine diphosphate serves as cofactor.

The protein localises to the plastid. It localises to the chloroplast. It carries out the reaction N(6)-[(R)-lipoyl]-L-lysyl-[protein] + pyruvate + H(+) = N(6)-[(R)-S(8)-acetyldihydrolipoyl]-L-lysyl-[protein] + CO2. Its function is as follows. The pyruvate dehydrogenase complex catalyzes the overall conversion of pyruvate to acetyl-CoA and CO(2). It contains multiple copies of three enzymatic components: pyruvate dehydrogenase (E1), dihydrolipoamide acetyltransferase (E2) and lipoamide dehydrogenase (E3). The sequence is that of Pyruvate dehydrogenase E1 component subunit beta (pdhB) from Staurastrum punctulatum (Green alga).